An 861-amino-acid polypeptide reads, in one-letter code: APC membrane recruitment protein 3 (861 aa).

Disordered stretches follow at residues 1–77, 179–206, 261–289, 351–415, 514–558, 576–644, 716–742, and 786–822; these read MELK…PKGG, AEGK…PPGE, PSLE…GPLQ, PLCP…FPRD, RGPT…GGAT, GLLA…SQKE, MLEQ…STQD, and AHGS…SQQE. The segment covering 362–384 has biased composition (polar residues); sequence SKASSIDTGTPKSEQPESVSTSD. The segment covering 518-530 has biased composition (pro residues); that stretch reads PRAPPTPGQPAAP. The segment covering 584–595 has biased composition (low complexity); it reads ALGGATQGTGTL. The span at 598-609 shows a compositional bias: basic and acidic residues; the sequence is DASREEETRGHS. 2 stretches are compositionally biased toward polar residues: residues 615–629 and 719–730; these read SMES…TSGK and QKQSSSSPSMTT.

It belongs to the Amer family.

Its subcellular location is the cell membrane. In terms of biological role, regulator of the canonical Wnt signaling pathway. Acts by specifically binding phosphatidylinositol 4,5-bisphosphate (PtdIns(4,5)P2), translocating to the cell membrane. In Homo sapiens (Human), this protein is APC membrane recruitment protein 3 (AMER3).